We begin with the raw amino-acid sequence, 136 residues long: Riboflavin kinase (136 aa).

Residue 15-20 (GLGEGR) coordinates CDP. Mg(2+) contacts are provided by Thr-44 and Asn-46. Residues Thr-103 and Glu-111 each contribute to the FMN site. 116–119 (YYLR) provides a ligand contact to CDP.

It belongs to the archaeal riboflavin kinase family. Requires Mg(2+) as cofactor.

It catalyses the reaction riboflavin + CTP = CDP + FMN + H(+). It functions in the pathway cofactor biosynthesis; FMN biosynthesis; FMN from riboflavin (CTP route): step 1/1. Functionally, catalyzes the CTP-dependent phosphorylation of riboflavin (vitamin B2) to form flavin mononucleotide (FMN). The polypeptide is Riboflavin kinase (Sulfurisphaera tokodaii (strain DSM 16993 / JCM 10545 / NBRC 100140 / 7) (Sulfolobus tokodaii)).